The primary structure comprises 199 residues: UPF0301 protein Daci_1578 (199 aa).

Belongs to the UPF0301 (AlgH) family.

This is UPF0301 protein Daci_1578 from Delftia acidovorans (strain DSM 14801 / SPH-1).